We begin with the raw amino-acid sequence, 351 residues long: Dihydroorotate dehydrogenase (quinone) (351 aa).

FMN is bound by residues 61–65 (AGLDK) and T85. K65 contacts substrate. Substrate is bound at residue 110 to 114 (NRMGF). The FMN site is built by N139 and N172. A substrate-binding site is contributed by N172. S175 (nucleophile) is an active-site residue. Residue N177 participates in substrate binding. FMN contacts are provided by K217 and T245. 246–247 (NT) lines the substrate pocket. Residues G268, G297, and 318 to 319 (YT) contribute to the FMN site.

It belongs to the dihydroorotate dehydrogenase family. Type 2 subfamily. In terms of assembly, monomer. It depends on FMN as a cofactor.

It localises to the cell membrane. The enzyme catalyses (S)-dihydroorotate + a quinone = orotate + a quinol. The protein operates within pyrimidine metabolism; UMP biosynthesis via de novo pathway; orotate from (S)-dihydroorotate (quinone route): step 1/1. Functionally, catalyzes the conversion of dihydroorotate to orotate with quinone as electron acceptor. This chain is Dihydroorotate dehydrogenase (quinone), found in Xylella fastidiosa (strain M23).